The sequence spans 228 residues: uncharacterized protein (228 aa).

A Response regulatory domain is found at 5–119; it reads HILIVEDEEK…ELLARIRAAL (115 aa). A 4-aspartylphosphate modification is found at aspartate 54. The ompR/PhoB-type DNA-binding region spans 130-228; sequence GTFLTYDDLR…IRGVGYAIKG (99 aa).

Phosphorylated by YkoH.

Its subcellular location is the cytoplasm. In terms of biological role, probable member of the two-component regulatory system YkoH/YkoG. This is an uncharacterized protein from Bacillus subtilis (strain 168).